We begin with the raw amino-acid sequence, 480 residues long: Cysteine--tRNA ligase (480 aa).

Zn(2+) is bound at residue Cys29. The 'HIGH' region signature appears at 31–41 (VTVYDHCHIGH). Zn(2+) is bound by residues Cys209, His234, and Glu238. Positions 266-270 (KMSKS) match the 'KMSKS' region motif. Lys269 lines the ATP pocket.

Belongs to the class-I aminoacyl-tRNA synthetase family. In terms of assembly, monomer. Requires Zn(2+) as cofactor.

The protein localises to the cytoplasm. It carries out the reaction tRNA(Cys) + L-cysteine + ATP = L-cysteinyl-tRNA(Cys) + AMP + diphosphate. This chain is Cysteine--tRNA ligase, found in Geobacter sp. (strain M21).